Reading from the N-terminus, the 855-residue chain is Inactive rhomboid protein 1 (855 aa).

Over 1–411 (MSEARRDSTS…HRPFFTYWLT (411 aa)) the chain is Cytoplasmic. 2 positions are modified to phosphoserine: Ser76 and Ser176. Phosphothreonine occurs at positions 180 and 183. Phosphoserine is present on Ser390. A helical membrane pass occupies residues 412–432 (FVHSLVTILAVCIYGIAPVGF). Over 433-655 (SQHETVDSVL…NPEVPDQFYR (223 aa)) the chain is Lumenal. A glycan (N-linked (GlcNAc...) asparagine) is linked at Asn583. Residues 656-676 (LWLSLFLHAGILHCLVSICFQ) traverse the membrane as a helical segment. Residues 677 to 691 (MTVLRDLEKLAGWHR) lie on the Cytoplasmic side of the membrane. The helical transmembrane segment at 692-712 (IAIIYLLSGVTGNLASAIFLP) threads the bilayer. The Lumenal portion of the chain corresponds to 713–714 (YR). A helical transmembrane segment spans residues 715–735 (AEVGPAGSQFGILACLFVELF). At 736-746 (QSWQILARPWR) the chain is on the cytoplasmic side. The helical transmembrane segment at 747–767 (AFFKLLAVVLFLFTFGLLPWI) threads the bilayer. The Lumenal portion of the chain corresponds to 768-772 (DNFAH). A helical transmembrane segment spans residues 773-793 (ISGFISGLFLSFAFLPYISFG). Over 794-803 (KFDLYRKRCQ) the chain is Cytoplasmic. The helical transmembrane segment at 804-824 (IIIFQVVFLGLLAGLVVLFYV) threads the bilayer. Topologically, residues 825–855 (YPVRCEWCEFLTCIPFTDKFCEKYELDAQLH) are lumenal.

This sequence belongs to the peptidase S54 family. As to quaternary structure, homodimer, or homooligomer. Interacts with TGFA and HBEGF. Interacts with EGF; may retain EGF in the endoplasmic reticulum and regulates its degradation through the endoplasmic reticulum-associated degradation (ERAD). Interacts (via cytoplasmic N-terminus) with FRMD8/iTAP; this interaction leads to mutual protein stabilization. Interacts with ADAM17/TACE. In terms of processing, N-glycosylated. In terms of tissue distribution, highly expressed in cerebellum, cerebrum, heart, skeletal muscle, placenta, pancreatic islet and testis. Detected at lower levels in colon, kidney, small intestine and lung.

Its subcellular location is the endoplasmic reticulum membrane. It localises to the golgi apparatus membrane. Its function is as follows. Regulates ADAM17 protease, a sheddase of the epidermal growth factor (EGF) receptor ligands and TNF, thereby plays a role in sleep, cell survival, proliferation, migration and inflammation. Does not exhibit any protease activity on its own. This Homo sapiens (Human) protein is Inactive rhomboid protein 1 (RHBDF1).